Here is a 227-residue protein sequence, read N- to C-terminus: E3 ubiquitin-protein ligase ZNRF1 (227 aa).

The disordered stretch occupies residues 1–42; that stretch reads MGGKQSTAARSRGPFPGVSTDDSAVPPPGGAPHFGHYRTGGG. A lipid anchor (N-myristoyl glycine) is attached at G2. Positions 2–10 are required for endosomal and lysosomal localization and myristoylation; the sequence is GGKQSTAAR. Phosphoserine is present on residues S50, S52, and S53. Residues 65–105 are disordered; that stretch reads GGVPFSLYTPASRGTGDSERAPGGGGSTSDSTYAHGNGYQE. The residue at position 103 (Y103) is a Phosphotyrosine. S123 bears the Phosphoserine mark. An RING-type; atypical zinc finger spans residues 184–225; that stretch reads CVICLEELLQGDTIARLPCLCIYHKSCIDSWFEVNRSCPEHP.

As to quaternary structure, interacts with AKT1, GLUL and TUBB2A. Interacts with ZNRF2. Interacts (via its RING domain) with UBE2N. Interacts (when phosphorylated) with YWHAE. N-myristoylation targets ZNRF1 to intracellular membranes. In terms of processing, phosphorylated by SRC at Tyr-103; leading to 'Lys-63'-linked ubiquitination of TLR3, lysosomal trafficking and degradation.

It localises to the endosome. Its subcellular location is the lysosome. The protein resides in the membrane. The protein localises to the cytoplasmic vesicle. It is found in the secretory vesicle. It localises to the synaptic vesicle membrane. The catalysed reaction is S-ubiquitinyl-[E2 ubiquitin-conjugating enzyme]-L-cysteine + [acceptor protein]-L-lysine = [E2 ubiquitin-conjugating enzyme]-L-cysteine + N(6)-ubiquitinyl-[acceptor protein]-L-lysine.. Its pathway is protein modification; protein ubiquitination. Functionally, E3 ubiquitin-protein ligase that plays a role in different processes including cell differentiation, receptor recycling or regulation of inflammation. Mediates the ubiquitination of AKT1 and GLUL, thereby playing a role in neuron cells differentiation. Plays a role in the establishment and maintenance of neuronal transmission and plasticity. Regulates Schwann cells differentiation by mediating ubiquitination of GLUL. Promotes neurodegeneration by mediating 'Lys-48'-linked polyubiquitination and subsequent degradation of AKT1 in axons: degradation of AKT1 prevents AKT1-mediated phosphorylation of GSK3B, leading to GSK3B activation and phosphorylation of DPYSL2/CRMP2 followed by destabilization of microtubule assembly in axons. Ubiquitinates the Na(+)/K(+) ATPase alpha-1 subunit/ATP1A1 and thereby influences its endocytosis and/or degradation. Controls ligand-induced EGFR signaling via mediating receptor ubiquitination and recruitment of the ESCRT machinery. Acts as a negative feedback mechanism controlling TLR3 trafficking by mediating TLR3 'Lys-63'-linked polyubiquitination to reduce type I IFN production. Modulates inflammation by promoting caveolin-1/CAV1 ubiquitination and degradation to regulate TLR4-activated immune response. This Mus musculus (Mouse) protein is E3 ubiquitin-protein ligase ZNRF1 (Znrf1).